Here is a 380-residue protein sequence, read N- to C-terminus: Ankyrin repeat domain-containing protein 63 (380 aa).

5 ANK repeats span residues Ala11–Ile40, Gln46–Leu79, Arg83–Ala112, Ala116–Leu145, and Ala153–Ala182. Low complexity-rich tracts occupy residues Ala181–Ser203 and Arg216–Ala226. A disordered region spans residues Ala181–Ser256. At Ser193 the chain carries Phosphoserine. Ser294 is modified (phosphoserine). A disordered region spans residues Pro309–Gln368.

In Homo sapiens (Human), this protein is Ankyrin repeat domain-containing protein 63.